Here is a 164-residue protein sequence, read N- to C-terminus: Crossover junction endodeoxyribonuclease RuvC (164 aa).

Residues D7, E67, and D140 contribute to the active site. 3 residues coordinate Mg(2+): D7, E67, and D140.

Belongs to the RuvC family. As to quaternary structure, homodimer which binds Holliday junction (HJ) DNA. The HJ becomes 2-fold symmetrical on binding to RuvC with unstacked arms; it has a different conformation from HJ DNA in complex with RuvA. In the full resolvosome a probable DNA-RuvA(4)-RuvB(12)-RuvC(2) complex forms which resolves the HJ. Requires Mg(2+) as cofactor.

The protein resides in the cytoplasm. It carries out the reaction Endonucleolytic cleavage at a junction such as a reciprocal single-stranded crossover between two homologous DNA duplexes (Holliday junction).. Its function is as follows. The RuvA-RuvB-RuvC complex processes Holliday junction (HJ) DNA during genetic recombination and DNA repair. Endonuclease that resolves HJ intermediates. Cleaves cruciform DNA by making single-stranded nicks across the HJ at symmetrical positions within the homologous arms, yielding a 5'-phosphate and a 3'-hydroxyl group; requires a central core of homology in the junction. The consensus cleavage sequence is 5'-(A/T)TT(C/G)-3'. Cleavage occurs on the 3'-side of the TT dinucleotide at the point of strand exchange. HJ branch migration catalyzed by RuvA-RuvB allows RuvC to scan DNA until it finds its consensus sequence, where it cleaves and resolves the cruciform DNA. The sequence is that of Crossover junction endodeoxyribonuclease RuvC from Chloroflexus aurantiacus (strain ATCC 29364 / DSM 637 / Y-400-fl).